The following is a 326-amino-acid chain: Pyruvate dehydrogenase E1 component subunit beta (326 aa).

A thiamine diphosphate-binding site is contributed by E59.

In terms of assembly, heterodimer of an alpha and a beta chain. The cofactor is thiamine diphosphate.

It carries out the reaction N(6)-[(R)-lipoyl]-L-lysyl-[protein] + pyruvate + H(+) = N(6)-[(R)-S(8)-acetyldihydrolipoyl]-L-lysyl-[protein] + CO2. In terms of biological role, the pyruvate dehydrogenase complex catalyzes the overall conversion of pyruvate to acetyl-CoA and CO(2). It contains multiple copies of three enzymatic components: pyruvate dehydrogenase (E1), dihydrolipoamide acetyltransferase (E2) and lipoamide dehydrogenase (E3). The protein is Pyruvate dehydrogenase E1 component subunit beta (pdhB) of Rickettsia conorii (strain ATCC VR-613 / Malish 7).